We begin with the raw amino-acid sequence, 89 residues long: Cornifin (89 aa).

Residues 1-29 (MSSQQQKQPCTPPPQLQQQQVKQPCQPPP) are disordered. The residue at position 2 (Ser2) is an N-acetylserine. 8 tandem repeats follow at residues 3 to 14 (SQQQKQPCTPPP), 18 to 29 (QQQVKQPCQPPP), 31 to 38 (EPCIPKTK), 39 to 46 (EPCLPKVP), 47 to 54 (EPCHPKVP), 55 to 62 (EPCQPKVP), 63 to 70 (EPCHPKVP), and 71 to 78 (EPCPSTVT). Positions 3 to 29 (SQQQKQPCTPPPQLQQQQVKQPCQPPP) are 2 X 12 AA approximate repeats. Residues 31–78 (EPCIPKTKEPCLPKVPEPCHPKVPEPCQPKVPEPCHPKVPEPCPSTVT) are 6 X 8 AA approximate tandem repeats. The tract at residues 68–89 (KVPEPCPSTVTPAPAQQKTKQK) is disordered. Polar residues predominate over residues 75-89 (STVTPAPAQQKTKQK).

Belongs to the cornifin (SPRR) family.

The protein localises to the cytoplasm. In terms of biological role, cross-linked envelope protein of keratinocytes. It is a keratinocyte protein that first appears in the cell cytosol, but ultimately becomes cross-linked to membrane proteins by transglutaminase. All that results in the formation of an insoluble envelope beneath the plasma membrane. This is Cornifin (SPRR1) from Macaca mulatta (Rhesus macaque).